A 359-amino-acid polypeptide reads, in one-letter code: Heat-inducible transcription repressor HrcA (359 aa).

Belongs to the HrcA family.

In terms of biological role, negative regulator of class I heat shock genes (grpE-dnaK-dnaJ and groELS operons). Prevents heat-shock induction of these operons. In Roseiflexus sp. (strain RS-1), this protein is Heat-inducible transcription repressor HrcA.